The following is a 391-amino-acid chain: Pepsin B (391 aa).

A signal peptide spans 1 to 16 (MKCLILALICLQLSEG). Residues 17-60 (LVVRQILHKGKSIRERMEENGVLEDFLRYNKKADPAAKFLFNKD) constitute a propeptide, activation peptide. Residues 75 to 388 (YFGEISIGTP…DMANNRVGFA (314 aa)) form the Peptidase A1 domain. Asp-93 is a catalytic residue. 2 disulfide bridges follow: Cys-106-Cys-111 and Cys-270-Cys-274. The active site involves Asp-279. An intrachain disulfide couples Cys-313 to Cys-346.

Belongs to the peptidase A1 family.

The protein resides in the secreted. It carries out the reaction Degradation of gelatin, little activity on hemoglobin. Specificity on B chain of insulin more restricted than that of pepsin A. Does not cleave 1-Phe-|-Val-2, 4-Gln-|-His-5 or 23-Gly-|-Phe-24.. In terms of biological role, hydrolyzes various peptides including beta-endorphin, insulin B chain, dynorphin A, and neurokinin A, with high specificity for the cleavage of the Phe-Xaa bonds. The sequence is that of Pepsin B from Monodelphis domestica (Gray short-tailed opossum).